The following is a 1576-amino-acid chain: Spermatogenesis-associated protein 31D1 (1576 aa).

A helical transmembrane segment spans residues 29-49; that stretch reads FICLSGLGLFILYLFYVVLTL. Disordered stretches follow at residues 170–197, 542–572, 782–801, 952–1033, and 1293–1347; these read FTLA…PPPP, HESP…QGQS, KDHL…RSNS, SQGD…TDFQ, and RVSP…PPPE. Residues 546-565 show a composition bias toward pro residues; that stretch reads VLPPPQPLSLPSTQPLPLPQ. Positions 966-980 are enriched in polar residues; the sequence is RSTFQGEKLGTTSSV. The span at 1004–1019 shows a compositional bias: basic and acidic residues; it reads QFSDTDHDLIETDSKD. Polar residues predominate over residues 1020 to 1032; it reads GASTSLRRGTTDF.

The protein belongs to the SPATA31 family.

The protein resides in the membrane. May play a role in spermatogenesis. The chain is Spermatogenesis-associated protein 31D1 (SPATA31D1) from Homo sapiens (Human).